A 144-amino-acid chain; its full sequence is Large ribosomal subunit protein uL11 (144 aa).

It belongs to the universal ribosomal protein uL11 family. Part of the ribosomal stalk of the 50S ribosomal subunit. Interacts with L10 and the large rRNA to form the base of the stalk. L10 forms an elongated spine to which L12 dimers bind in a sequential fashion forming a multimeric L10(L12)X complex. Post-translationally, one or more lysine residues are methylated.

In terms of biological role, forms part of the ribosomal stalk which helps the ribosome interact with GTP-bound translation factors. The sequence is that of Large ribosomal subunit protein uL11 from Streptomyces sp. (strain FRI-5).